The primary structure comprises 662 residues: DNA ligase (662 aa).

Residues 31-35 (DKDYD) and 79-80 (SL) contribute to the NAD(+) site. The N6-AMP-lysine intermediate role is filled by Lys-121. The NAD(+) site is built by Arg-143, Glu-177, and Lys-313. Positions 406, 409, 422, and 428 each coordinate Zn(2+). The BRCT domain occupies 586–662 (VLESPFMGKT…LSEEEFENMI (77 aa)).

This sequence belongs to the NAD-dependent DNA ligase family. LigA subfamily. Requires Mg(2+) as cofactor. Mn(2+) is required as a cofactor.

The catalysed reaction is NAD(+) + (deoxyribonucleotide)n-3'-hydroxyl + 5'-phospho-(deoxyribonucleotide)m = (deoxyribonucleotide)n+m + AMP + beta-nicotinamide D-nucleotide.. Its function is as follows. DNA ligase that catalyzes the formation of phosphodiester linkages between 5'-phosphoryl and 3'-hydroxyl groups in double-stranded DNA using NAD as a coenzyme and as the energy source for the reaction. It is essential for DNA replication and repair of damaged DNA. This chain is DNA ligase, found in Clostridium perfringens (strain ATCC 13124 / DSM 756 / JCM 1290 / NCIMB 6125 / NCTC 8237 / Type A).